A 490-amino-acid polypeptide reads, in one-letter code: Sporulation-specific protein 1 (490 aa).

Residues 18 to 272 form the Protein kinase domain; that stretch reads YSIQSCIGRG…AYNLLSFEFV (255 aa). ATP contacts are provided by residues 24–32 and Lys47; that span reads IGRGNFGDV. The active-site Proton acceptor is the Asp141.

This sequence belongs to the protein kinase superfamily. STE Ser/Thr protein kinase family. STE20 subfamily.

It localises to the nucleus. Its subcellular location is the cytoplasm. The catalysed reaction is L-seryl-[protein] + ATP = O-phospho-L-seryl-[protein] + ADP + H(+). It carries out the reaction L-threonyl-[protein] + ATP = O-phospho-L-threonyl-[protein] + ADP + H(+). In terms of biological role, serine/threonine protein kinase required for spore wall development. The protein is Sporulation-specific protein 1 (SPS1) of Saccharomyces cerevisiae (strain ATCC 204508 / S288c) (Baker's yeast).